Consider the following 515-residue polypeptide: Cytochrome P450 monooxygenase ptmJ (515 aa).

The next 4 membrane-spanning stretches (helical) occupy residues 6–26 (LGPF…LFVI), 50–70 (LGVV…LFCV), 82–102 (VFYL…EPVV), and 300–320 (VIIL…LFLH). Cys449 is a heme binding site.

The protein belongs to the cytochrome P450 family. The cofactor is heme.

The protein localises to the membrane. It functions in the pathway secondary metabolite biosynthesis. Its function is as follows. Cytochrome P450 monooxygenase; part of the gene cluster that mediates the biosynthesis of the indole diterpenes penitrems. The geranylgeranyl diphosphate (GGPP) synthase ptmG catalyzes the first step in penitrem biosynthesis via conversion of farnesyl pyrophosphate and isopentyl pyrophosphate into geranylgeranyl pyrophosphate (GGPP). Condensation of indole-3-glycerol phosphate with GGPP by the prenyl transferase ptmC then forms 3-geranylgeranylindole (3-GGI). Epoxidation by the FAD-dependent monooxygenase ptmM leads to a epoxidized-GGI that is substrate of the terpene cyclase ptmB for cyclization to yield paspaline. Paspaline is subsequently converted to 13-desoxypaxilline by the cytochrome P450 monooxygenase ptmP, the latter being then converted to paxilline by the cytochrome P450 monooxygenase ptmQ. Paxilline is converted to beta-paxitriol via C-10 ketoreduction by the short-chain dehydrogenase ptmH which can be monoprenylated at the C-20 by the indole diterpene prenyltransferase ptmD. A two-step elimination (acetylation and elimination) process performed by the O-acetyltransferase ptmV and ptmI leads to the production of the prenylated form of penijanthine. The FAD-linked oxidoreductase ptmO then converts the prenylated form of penijanthine into PC-M5 which is in turn transformed into PC-M4 by the aromatic dimethylallyltransferase ptmE. Five sequential oxidative transformations performed by the cytochrome P450 monooxygenases ptmK, ptmU, ptmL, ptmN and ptmJ yield the various penitrem compounds. PtmK, ptmU and ptmM are involved in the formation of the key bicyclic ring of penitrem C via the formation of the intermediates secopenitrem D and penitrem D. PtmL catalyzes the epoxidation of penitrem D and C to yield penitrem B and F, respectively. PtmJ catalyzes the last benzylic hydroxylation to convert penitrem B to prenitrem E and penitrem F to penitrem A. The sequence is that of Cytochrome P450 monooxygenase ptmJ from Penicillium ochrochloron.